A 542-amino-acid chain; its full sequence is Bifunctional NAD(P)H-hydrate repair enzyme Nnr (542 aa).

Residues 1-243 (MASSDAEALC…PFVLDRAAEK (243 aa)) form an NAD(P)H-hydrate epimerase region. One can recognise a YjeF N-terminal domain in the interval 19–238 (MQAADRYTIE…DIGMPPFVLD (220 aa)). The interval 69-73 (NNGGD) is NADPHX 1; for epimerase activity. The K(+) site is built by N70 and D148. Positions 152-158 (GTGLTSD) are NADPHX 1; for epimerase activity. (6S)-NADPHX is bound at residue D181. Residue T184 participates in K(+) binding. In terms of domain architecture, YjeF C-terminal spans 251 to 534 (TDAAVRAWWP…DMIPRVAAER (284 aa)). The tract at residues 251-542 (TDAAVRAWWP…ERFGEGRRQR (292 aa)) is ADP-dependent (S)-NAD(P)H-hydrate dehydratase. G358 lines the (6S)-NADPHX pocket. The segment at 410–416 (HAGEFRR) is NADPHX 2; for dehydratase activity. Residues 445-449 (KGMPS) and 465-474 (TPALATAGTG) contribute to the ADP site. D475 contacts (6S)-NADPHX.

This sequence in the N-terminal section; belongs to the NnrE/AIBP family. In the C-terminal section; belongs to the NnrD/CARKD family. K(+) is required as a cofactor.

The catalysed reaction is (6S)-NADHX + ADP = AMP + phosphate + NADH + H(+). The enzyme catalyses (6S)-NADPHX + ADP = AMP + phosphate + NADPH + H(+). It catalyses the reaction (6R)-NADHX = (6S)-NADHX. It carries out the reaction (6R)-NADPHX = (6S)-NADPHX. Bifunctional enzyme that catalyzes the epimerization of the S- and R-forms of NAD(P)HX and the dehydration of the S-form of NAD(P)HX at the expense of ADP, which is converted to AMP. This allows the repair of both epimers of NAD(P)HX, a damaged form of NAD(P)H that is a result of enzymatic or heat-dependent hydration. The protein is Bifunctional NAD(P)H-hydrate repair enzyme Nnr (nnr) of Salinibacter ruber (strain DSM 13855 / M31).